The chain runs to 288 residues: Quinate/shikimate dehydrogenase (288 aa).

Residues K71 and D107 each contribute to the substrate site. NAD(+)-binding positions include 132–135 (AGGA), 155–158 (NRRD), K205, 232–235 (CVYN), and G255.

It belongs to the shikimate dehydrogenase family. In terms of assembly, homodimer.

The enzyme catalyses L-quinate + NAD(+) = 3-dehydroquinate + NADH + H(+). It carries out the reaction L-quinate + NADP(+) = 3-dehydroquinate + NADPH + H(+). The catalysed reaction is shikimate + NADP(+) = 3-dehydroshikimate + NADPH + H(+). It catalyses the reaction shikimate + NAD(+) = 3-dehydroshikimate + NADH + H(+). The protein operates within metabolic intermediate biosynthesis; chorismate biosynthesis; chorismate from D-erythrose 4-phosphate and phosphoenolpyruvate: step 4/7. Functionally, the actual biological function of YdiB remains unclear, nor is it known whether 3-dehydroshikimate or quinate represents the natural substrate. Catalyzes the reversible NAD-dependent reduction of both 3-dehydroshikimate (DHSA) and 3-dehydroquinate to yield shikimate (SA) and quinate, respectively. It can use both NAD or NADP for catalysis, however it has higher catalytic efficiency with NAD. The sequence is that of Quinate/shikimate dehydrogenase from Shigella sonnei (strain Ss046).